The sequence spans 203 residues: MTLTAGVVAVQGDVSEHAAAIRRAADAHGQPADVREIRTAGVVPECDVLLLPGGESTAISRLLDREGIDAEIRSHVAAGKPLLATCAGLIVSSTDANDDRVETLDVLDVTVDRNAFGRQVDSFEAPLDVDGLADPFPAVFIRAPVIDEVGADATVLASWDGRPVAIRDGPVVATSFHPELTADVRLHELAFFDRTPSAQAGDA.

54–56 (GES) is a binding site for L-glutamine. C86 acts as the Nucleophile in catalysis. L-glutamine is bound by residues R113 and 141 to 142 (IR). Active-site charge relay system residues include H177 and E179.

This sequence belongs to the glutaminase PdxT/SNO family. In the presence of PdxS, forms a dodecamer of heterodimers. Only shows activity in the heterodimer.

It catalyses the reaction aldehydo-D-ribose 5-phosphate + D-glyceraldehyde 3-phosphate + L-glutamine = pyridoxal 5'-phosphate + L-glutamate + phosphate + 3 H2O + H(+). It carries out the reaction L-glutamine + H2O = L-glutamate + NH4(+). The protein operates within cofactor biosynthesis; pyridoxal 5'-phosphate biosynthesis. In terms of biological role, catalyzes the hydrolysis of glutamine to glutamate and ammonia as part of the biosynthesis of pyridoxal 5'-phosphate. The resulting ammonia molecule is channeled to the active site of PdxS. This chain is Pyridoxal 5'-phosphate synthase subunit PdxT, found in Halobacterium salinarum (strain ATCC 29341 / DSM 671 / R1).